Consider the following 543-residue polypeptide: Aluminum-activated malate transporter 14 (543 aa).

The next 6 helical transmembrane spans lie at 56–76 (VGVSLTLVSLLYLMEPLFKGI), 80–100 (AIWAVMTVVVVLEFSAGATLC), 106–126 (GLGTLIAGSLAFFIEFVANDS), 129–149 (IFRAIFIGAAVFIIGALITYL), 164–184 (LIFLLTFNLITVSSYRVDTVI), and 191–211 (FYTIAMGVGICLLMSLLVFPI). Positions 416–438 (DTNEAASYQNTGTPRGERMSRFG) are disordered. Polar residues predominate over residues 419-428 (EAASYQNTGT). The stretch at 445 to 472 (RLRADTLERRSAAATNERKILRQQLSRI) forms a coiled coil.

It belongs to the aromatic acid exporter (TC 2.A.85) family.

The protein localises to the membrane. Malate transporter. The chain is Aluminum-activated malate transporter 14 (ALMT14) from Arabidopsis thaliana (Mouse-ear cress).